We begin with the raw amino-acid sequence, 344 residues long: Glycerol-3-phosphate dehydrogenase [NAD(P)+] (344 aa).

NADPH contacts are provided by Ser-11, Trp-12, His-32, Arg-33, and Lys-106. 3 residues coordinate sn-glycerol 3-phosphate: Lys-106, Gly-136, and Ser-138. Ala-140 is a binding site for NADPH. 5 residues coordinate sn-glycerol 3-phosphate: Lys-192, Asp-245, Ser-255, Arg-256, and Asn-257. The Proton acceptor role is filled by Lys-192. Arg-256 lines the NADPH pocket. Positions 280 and 282 each coordinate NADPH.

The protein belongs to the NAD-dependent glycerol-3-phosphate dehydrogenase family.

The protein resides in the cytoplasm. It catalyses the reaction sn-glycerol 3-phosphate + NAD(+) = dihydroxyacetone phosphate + NADH + H(+). The catalysed reaction is sn-glycerol 3-phosphate + NADP(+) = dihydroxyacetone phosphate + NADPH + H(+). Its pathway is membrane lipid metabolism; glycerophospholipid metabolism. In terms of biological role, catalyzes the reduction of the glycolytic intermediate dihydroxyacetone phosphate (DHAP) to sn-glycerol 3-phosphate (G3P), the key precursor for phospholipid synthesis. This chain is Glycerol-3-phosphate dehydrogenase [NAD(P)+], found in Geobacillus kaustophilus (strain HTA426).